Reading from the N-terminus, the 134-residue chain is Protein Turandot E (134 aa).

A signal peptide spans 1 to 38 (MSNTRTVHSSTSISKMNSALQISCLLVVLGCLLGSGHC).

It belongs to the Turandot family.

The protein localises to the secreted. Functionally, a humoral factor that may play a role in stress tolerance. The sequence is that of Protein Turandot E from Drosophila melanogaster (Fruit fly).